The following is a 185-amino-acid chain: Ribosome-recycling factor (185 aa).

The protein belongs to the RRF family.

The protein resides in the cytoplasm. Responsible for the release of ribosomes from messenger RNA at the termination of protein biosynthesis. May increase the efficiency of translation by recycling ribosomes from one round of translation to another. In Buchnera aphidicola subsp. Acyrthosiphon pisum (strain Tuc7), this protein is Ribosome-recycling factor.